The sequence spans 172 residues: Large ribosomal subunit protein uL10 (172 aa).

This sequence belongs to the universal ribosomal protein uL10 family. In terms of assembly, part of the ribosomal stalk of the 50S ribosomal subunit. The N-terminus interacts with L11 and the large rRNA to form the base of the stalk. The C-terminus forms an elongated spine to which L12 dimers bind in a sequential fashion forming a multimeric L10(L12)X complex.

In terms of biological role, forms part of the ribosomal stalk, playing a central role in the interaction of the ribosome with GTP-bound translation factors. In Brucella abortus (strain S19), this protein is Large ribosomal subunit protein uL10.